The following is a 657-amino-acid chain: Glycogen debranching enzyme (657 aa).

The Nucleophile role is filled by Asp336. Residue Glu371 is the Proton donor of the active site. Basic and acidic residues predominate over residues 458 to 467; sequence NEANGEENRD. A disordered region spans residues 458 to 479; that stretch reads NEANGEENRDGTNNNYSNNHGK.

This sequence belongs to the glycosyl hydrolase 13 family.

The enzyme catalyses Hydrolysis of (1-&gt;6)-alpha-D-glucosidic linkages to branches with degrees of polymerization of three or four glucose residues in limit dextrin.. Its pathway is glycan degradation; glycogen degradation. In terms of biological role, removes maltotriose and maltotetraose chains that are attached by 1,6-alpha-linkage to the limit dextrin main chain, generating a debranched limit dextrin. The chain is Glycogen debranching enzyme from Escherichia coli (strain SE11).